Reading from the N-terminus, the 118-residue chain is Crustacean hyperglycemic hormones 2 (118 aa).

A signal peptide spans 1-22; it reads MTAFRLVAVALVVVVACSTTWA. 3 cysteine pairs are disulfide-bonded: Cys-51–Cys-87, Cys-67–Cys-83, and Cys-70–Cys-96. Val-116 bears the Valine amide mark.

This sequence belongs to the arthropod CHH/MIH/GIH/VIH hormone family.

Its subcellular location is the secreted. Its function is as follows. Hormone found in the sinus gland of isopods and decapods which controls the blood sugar level. Has a secretagogue action over the amylase released from the midgut gland. May act as a stress hormone and may be involved in the control of molting and reproduction. In Penaeus monodon (Giant tiger prawn), this protein is Crustacean hyperglycemic hormones 2 (CHH2).